The chain runs to 266 residues: Protein YABBY 5 (266 aa).

Residues 1 to 22 (MMSSAPETFSLDHLSQHQQQQP) form a disordered region. A C4-type zinc finger spans residues 36–63 (CNFCDTILAVGVPCSSLFKTVTVRCGHC). Over residues 119-141 (ASPNVSSITSSNSSCANNAPATS) the composition is skewed to low complexity. The interval 119–174 (ASPNVSSITSSNSSCANNAPATSMASAANKATQREPQQPKNAPSANRTSEKRQRVP) is disordered. Polar residues predominate over residues 142–165 (MASAANKATQREPQQPKNAPSANR).

The protein belongs to the YABBY family.

It localises to the nucleus. Functionally, may be involved in leaf cell growth and differentiation, rather than abaxial cell fate determination. The chain is Protein YABBY 5 (YAB5) from Oryza sativa subsp. indica (Rice).